Here is a 320-residue protein sequence, read N- to C-terminus: GTP 3',8-cyclase (320 aa).

Positions 5–225 (QFGRKINYLR…IQLIKKDEKA (221 aa)) constitute a Radical SAM core domain. Arginine 14 is a GTP binding site. 2 residues coordinate [4Fe-4S] cluster: cysteine 21 and cysteine 25. Residue tyrosine 27 participates in S-adenosyl-L-methionine binding. Cysteine 28 is a binding site for [4Fe-4S] cluster. Position 64 (arginine 64) interacts with GTP. Glycine 68 provides a ligand contact to S-adenosyl-L-methionine. Position 95 (threonine 95) interacts with GTP. S-adenosyl-L-methionine is bound at residue serine 119. A GTP-binding site is contributed by lysine 155. Position 189 (methionine 189) interacts with S-adenosyl-L-methionine. Residues cysteine 248 and cysteine 251 each contribute to the [4Fe-4S] cluster site. 253-255 (RIR) lines the GTP pocket. Cysteine 265 contacts [4Fe-4S] cluster.

It belongs to the radical SAM superfamily. MoaA family. As to quaternary structure, monomer and homodimer. The cofactor is [4Fe-4S] cluster.

The catalysed reaction is GTP + AH2 + S-adenosyl-L-methionine = (8S)-3',8-cyclo-7,8-dihydroguanosine 5'-triphosphate + 5'-deoxyadenosine + L-methionine + A + H(+). It participates in cofactor biosynthesis; molybdopterin biosynthesis. Functionally, catalyzes the cyclization of GTP to (8S)-3',8-cyclo-7,8-dihydroguanosine 5'-triphosphate. The protein is GTP 3',8-cyclase of Campylobacter jejuni (strain RM1221).